The sequence spans 149 residues: Large ribosomal subunit protein bL9 (149 aa).

It belongs to the bacterial ribosomal protein bL9 family.

Functionally, binds to the 23S rRNA. The sequence is that of Large ribosomal subunit protein bL9 from Citrobacter koseri (strain ATCC BAA-895 / CDC 4225-83 / SGSC4696).